The following is a 103-amino-acid chain: Large ribosomal subunit protein eL14 (103 aa).

The protein belongs to the eukaryotic ribosomal protein eL14 family.

The protein is Large ribosomal subunit protein eL14 of Pyrobaculum islandicum (strain DSM 4184 / JCM 9189 / GEO3).